The sequence spans 218 residues: Pyridoxine/pyridoxamine 5'-phosphate oxidase (218 aa).

Residues Arg-14–Tyr-17 and Lys-72 contribute to the substrate site. Residues Arg-67 to Lys-72, Tyr-82 to Thr-83, Arg-88, Lys-89, and Gln-111 each bind FMN. The substrate site is built by Tyr-129, Arg-133, and Ser-137. FMN is bound by residues Gln-146–Ser-147 and Trp-191. Substrate is bound at residue Arg-197 to His-199. Position 201 (Arg-201) interacts with FMN.

This sequence belongs to the pyridoxamine 5'-phosphate oxidase family. As to quaternary structure, homodimer. The cofactor is FMN.

It carries out the reaction pyridoxamine 5'-phosphate + O2 + H2O = pyridoxal 5'-phosphate + H2O2 + NH4(+). It catalyses the reaction pyridoxine 5'-phosphate + O2 = pyridoxal 5'-phosphate + H2O2. It functions in the pathway cofactor metabolism; pyridoxal 5'-phosphate salvage; pyridoxal 5'-phosphate from pyridoxamine 5'-phosphate: step 1/1. Its pathway is cofactor metabolism; pyridoxal 5'-phosphate salvage; pyridoxal 5'-phosphate from pyridoxine 5'-phosphate: step 1/1. Catalyzes the oxidation of either pyridoxine 5'-phosphate (PNP) or pyridoxamine 5'-phosphate (PMP) into pyridoxal 5'-phosphate (PLP). The sequence is that of Pyridoxine/pyridoxamine 5'-phosphate oxidase from Salmonella paratyphi B (strain ATCC BAA-1250 / SPB7).